The chain runs to 361 residues: 3-dehydroquinate synthase (361 aa).

NAD(+) is bound by residues 104–108, 128–129, Lys140, and Lys149; these read GVIGD and TT. Glu182, His245, and His262 together coordinate Zn(2+).

This sequence belongs to the sugar phosphate cyclases superfamily. Dehydroquinate synthase family. It depends on NAD(+) as a cofactor. Requires Co(2+) as cofactor. The cofactor is Zn(2+).

The protein resides in the cytoplasm. The enzyme catalyses 7-phospho-2-dehydro-3-deoxy-D-arabino-heptonate = 3-dehydroquinate + phosphate. It functions in the pathway metabolic intermediate biosynthesis; chorismate biosynthesis; chorismate from D-erythrose 4-phosphate and phosphoenolpyruvate: step 2/7. Catalyzes the conversion of 3-deoxy-D-arabino-heptulosonate 7-phosphate (DAHP) to dehydroquinate (DHQ). This Halalkalibacterium halodurans (strain ATCC BAA-125 / DSM 18197 / FERM 7344 / JCM 9153 / C-125) (Bacillus halodurans) protein is 3-dehydroquinate synthase.